Reading from the N-terminus, the 691-residue chain is MGTVSSRRLWWPLPLLLLLLLLGPAGARAQEDDDGDYEELVLALRSEEDGLADALQHGATATFHRCAKEPWRLPGTYVVVLKEETHRSQPERTARRLQAQAARRGYLIKLLHVFHDLLPGFLVKMSRDLLELALKLPHVDYIEEDSSVFAQSIPWNLERITPARYRADEYQPPNGGSLVEVYLLDTSIQSGHREIEGRVMVTDFGSVPEEDGTRFHRQASKCDSHGTHLAGVVSGRDAGVAKGASLRSLRVLNCQGKGTVSSTLIGLEFIRKSQLVQPVGPLVVLLPLAGGYSRVLNAACQRLARAGVVLVAAAGNFRDDACLYSPASAPEVITVGATNAQDQPVTLGTLGTNFGRCVDLFAPGEDIIGASSDCSTCFVSRSGTSQAAAHVAGIAAVMLSAEPELTLAELRQRLIHFSAKDVINEAWFPEDQRVLTPNLVAALPPSTHGAGWQLFCRTVWSAHSGPTRMATAMARCAPDEELLSCSSFSSSGKRRGERIEAQGGRRVCLAHNAFGGKGVYAIARCCLLPQANCSIHTAPPAGASMGTRAHCHQQGHVLTGCSAHWEVEELGTHKPPVLRPGGQPSQCMGHSGASTHATCCHAPGLECKVKEHGLPAPQEQVTVACEEGWTLTGCSALPGTSHILGAYAVDDTCVVRSQDVSTTGSTSEEAVAAVAICCRSRHLAQASQELQ.

An N-terminal signal peptide occupies residues Met-1–Ala-29. A propeptide spanning residues Gln-30–Gln-151 is cleaved from the precursor. At Tyr-37 the chain carries Sulfotyrosine. Position 46 is a phosphoserine (Ser-46). The 73-residue stretch at Thr-76–Val-148 folds into the Inhibitor I9 domain. In terms of domain architecture, Peptidase S8 spans Pro-154–Trp-460. Active-site charge relay system residues include Asp-185 and His-225. Disulfide bonds link Cys-222–Cys-254 and Cys-322–Cys-357. The active-site Charge relay system is Ser-385. Residues Gly-449–Gln-691 are C-terminal domain. Disulfide bonds link Cys-456–Cys-526, Cys-476–Cys-525, and Cys-485–Cys-508. An N-linked (GlcNAc...) asparagine glycan is attached at Asn-532. Intrachain disulfides connect Cys-533-Cys-600, Cys-551-Cys-599, Cys-561-Cys-587, Cys-607-Cys-678, Cys-625-Cys-677, and Cys-634-Cys-653. At Ser-687 the chain carries Phosphoserine.

This sequence belongs to the peptidase S8 family. Monomer. Can self-associate to form dimers and higher multimers which may have increased LDLR degrading activity. The precursor protein but not the mature protein may form multimers. Interacts with APOB, VLDLR, LRP8/APOER2 and BACE1. The full-length immature form (pro-PCSK9) interacts with SCNN1A, SCNN1B and SCNN1G. The pro-PCSK9 form (via C-terminal domain) interacts with LDLR. Interacts (via the C-terminal domain) with ANXA2 (via repeat Annexin 1); the interaction inhibits the degradation of LDLR. It depends on Ca(2+) as a cofactor. Post-translationally, cleavage by furin and PCSK5 generates a truncated inactive protein that is unable to induce LDLR degradation. In terms of processing, undergoes autocatalytic cleavage in the endoplasmic reticulum to release the propeptide from the N-terminus and the cleavage of the propeptide is strictly required for its maturation and activation. The cleaved propeptide however remains associated with the catalytic domain through non-covalent interactions, preventing potential substrates from accessing its active site. As a result, it is secreted from cells as a propeptide-containing, enzymatically inactive protein. Phosphorylation protects the propeptide against proteolysis.

Its subcellular location is the cytoplasm. The protein localises to the secreted. It localises to the endosome. The protein resides in the lysosome. It is found in the cell surface. Its subcellular location is the endoplasmic reticulum. The protein localises to the golgi apparatus. Its activity is regulated as follows. Its proteolytic activity is autoinhibited by the non-covalent binding of the propeptide to the catalytic domain. Inhibited by EGTA. Crucial player in the regulation of plasma cholesterol homeostasis. Binds to low-density lipid receptor family members: low density lipoprotein receptor (LDLR), very low density lipoprotein receptor (VLDLR), apolipoprotein E receptor (LRP1/APOER) and apolipoprotein receptor 2 (LRP8/APOER2), and promotes their degradation in intracellular acidic compartments. Acts via a non-proteolytic mechanism to enhance the degradation of the hepatic LDLR through a clathrin LDLRAP1/ARH-mediated pathway. May prevent the recycling of LDLR from endosomes to the cell surface or direct it to lysosomes for degradation. Can induce ubiquitination of LDLR leading to its subsequent degradation. Inhibits intracellular degradation of APOB via the autophagosome/lysosome pathway in a LDLR-independent manner. Involved in the disposal of non-acetylated intermediates of BACE1 in the early secretory pathway. Inhibits epithelial Na(+) channel (ENaC)-mediated Na(+) absorption by reducing ENaC surface expression primarily by increasing its proteasomal degradation. Regulates neuronal apoptosis via modulation of LRP8/APOER2 levels and related anti-apoptotic signaling pathways. This is Proprotein convertase subtilisin/kexin type 9 (PCSK9) from Saimiri boliviensis boliviensis (Bolivian squirrel monkey).